Here is a 540-residue protein sequence, read N- to C-terminus: MIKTTEHIVNNSIERDYSKSISLEHRKKFAQFFTPFPIAYAMAKWILGNKQLKTVLEPAFGLGVFSRAILSQQKEINIKAFEVDETIFENAKEYFDDFENVNILLQDYMYNDWKNKYDGIICNPPYFKFHDYDNKNILKEIETNLKCKLNGFTNLYTLFLLKSIHQLSQNGRCAYIIPSEFLNSDYGKLVKTYLIKSKTLRHIIVIDFEENVFDDALTTASIILCANDNITDKVQFNNIQSLQDLSKIDEIINKYPNFLETEQTYNFSDLNPEIKWKAYYQKQNSIKFKNLVPFSTYAKVVRGIATGSNEYFTFNLSKAKEFNIDEQYLLPCICSAKDAKTSFFTKQDFEELKKSDKSVFLFNAQNSTDKNISSYIQKGESEEINKRFLTASRTPWYSLENRKPAPIWVSVFNRSGLRFIRNEANISNLTSYHCIIQNKQVVSEIDIDLLFAYLLTDTAKQIFEDNSRQYGNGLQKFEPNDLNKGMMLDLGLLDKQTSDEILNLYKEYKYLILDNKNGDEIINKIDKILTDKYSEKKHWA.

Belongs to the N(4)/N(6)-methyltransferase family. As to quaternary structure, monomer.

It carries out the reaction a 2'-deoxyadenosine in DNA + S-adenosyl-L-methionine = an N(6)-methyl-2'-deoxyadenosine in DNA + S-adenosyl-L-homocysteine + H(+). A gamma subtype methylase, recognizes the double-stranded sequence 5'-GTMKAC-3', methylates A-5 on both strands, and protects the DNA from cleavage by the AccI endonuclease. In Acinetobacter calcoaceticus, this protein is Type II methyltransferase M.AccI (accIM).